The following is a 651-amino-acid chain: Probable potassium transport system protein Kup (651 aa).

12 consecutive transmembrane segments (helical) span residues 41-61 (LVLG…IYAF), 82-102 (VVSL…VLFV), 130-150 (LILG…VITP), 163-183 (IVAP…LVTL), 194-214 (VAIV…ASGL), 235-255 (FLTV…LAMT), 276-296 (WLWI…AFIL), 309-329 (MIPS…TVIA), 366-386 (IYIP…VLGF), 395-415 (AYGI…YIVM), 426-446 (ALPI…ANII), and 450-470 (EGGW…WTWV).

The protein belongs to the HAK/KUP transporter (TC 2.A.72) family.

The protein localises to the cell inner membrane. It carries out the reaction K(+)(in) + H(+)(in) = K(+)(out) + H(+)(out). Functionally, transport of potassium into the cell. Likely operates as a K(+):H(+) symporter. This Brucella melitensis biotype 2 (strain ATCC 23457) protein is Probable potassium transport system protein Kup.